A 495-amino-acid chain; its full sequence is Putative aldehyde dehydrogenase DhaS (495 aa).

Residue 244–249 (GSTEIG) participates in NAD(+) binding. Residues E266 and C300 contribute to the active site.

The protein belongs to the aldehyde dehydrogenase family.

The enzyme catalyses an aldehyde + NAD(+) + H2O = a carboxylate + NADH + 2 H(+). The chain is Putative aldehyde dehydrogenase DhaS (dhaS) from Bacillus subtilis (strain 168).